Consider the following 194-residue polypeptide: Fe/S biogenesis protein NfuA (194 aa).

The [4Fe-4S] cluster site is built by cysteine 151 and cysteine 154.

Belongs to the NfuA family. As to quaternary structure, homodimer. It depends on [4Fe-4S] cluster as a cofactor.

Involved in iron-sulfur cluster biogenesis. Binds a 4Fe-4S cluster, can transfer this cluster to apoproteins, and thereby intervenes in the maturation of Fe/S proteins. Could also act as a scaffold/chaperone for damaged Fe/S proteins. This Pasteurella multocida (strain Pm70) protein is Fe/S biogenesis protein NfuA.